The following is a 548-amino-acid chain: 2-succinyl-5-enolpyruvyl-6-hydroxy-3-cyclohexene-1-carboxylate synthase (548 aa).

The protein belongs to the TPP enzyme family. MenD subfamily. As to quaternary structure, homodimer. Mg(2+) is required as a cofactor. Mn(2+) serves as cofactor. Requires thiamine diphosphate as cofactor.

It catalyses the reaction isochorismate + 2-oxoglutarate + H(+) = 5-enolpyruvoyl-6-hydroxy-2-succinyl-cyclohex-3-ene-1-carboxylate + CO2. Its pathway is quinol/quinone metabolism; 1,4-dihydroxy-2-naphthoate biosynthesis; 1,4-dihydroxy-2-naphthoate from chorismate: step 2/7. It participates in quinol/quinone metabolism; menaquinone biosynthesis. In terms of biological role, catalyzes the thiamine diphosphate-dependent decarboxylation of 2-oxoglutarate and the subsequent addition of the resulting succinic semialdehyde-thiamine pyrophosphate anion to isochorismate to yield 2-succinyl-5-enolpyruvyl-6-hydroxy-3-cyclohexene-1-carboxylate (SEPHCHC). The protein is 2-succinyl-5-enolpyruvyl-6-hydroxy-3-cyclohexene-1-carboxylate synthase of Mycolicibacterium vanbaalenii (strain DSM 7251 / JCM 13017 / BCRC 16820 / KCTC 9966 / NRRL B-24157 / PYR-1) (Mycobacterium vanbaalenii).